Here is a 408-residue protein sequence, read N- to C-terminus: Zinc finger protein 764 (408 aa).

The 72-residue stretch at 26-97 folds into the KRAB domain; that stretch reads VSFADVAVYF…AAQDPEVAKC (72 aa). The disordered stretch occupies residues 91 to 167; the sequence is DPEVAKCQTQ…GRPSLCAHPP (77 aa). C2H2-type zinc fingers lie at residues 175–197, 203–225, 231–253, 259–281, 287–309, 315–337, and 343–365; these read HGCY…VYSH, FHCT…RAIH, HRCL…LRVH, YGCA…RRVH, FPCP…VRTH, YPCP…RRTH, and YPCP…QWVH.

Belongs to the krueppel C2H2-type zinc-finger protein family. In terms of assembly, interacts (via KRAB domain) with NR3C1/GR (via NR LBD domain); the interaction regulates transcription factor activity of NR3C1 by directing its actions toward certain biologic pathways.

The protein localises to the nucleus. Zinc finger protein that functions as a cofactor for steroid hormone receptors, such as NR3C1/GR. Directs NR3C1/GR transcriptional activity toward specific biologic pathways by changing NR3C1/GR binding and transcriptional activity on the glucocorticoid-responsive genes. The chain is Zinc finger protein 764 from Homo sapiens (Human).